Here is a 209-residue protein sequence, read N- to C-terminus: 2-phospho-L-lactate guanylyltransferase (209 aa).

It belongs to the CofC family. Homodimer.

The enzyme catalyses (2S)-2-phospholactate + GTP + H(+) = (2S)-lactyl-2-diphospho-5'-guanosine + diphosphate. It participates in cofactor biosynthesis; coenzyme F420 biosynthesis. Functionally, guanylyltransferase that catalyzes the activation of (2S)-2-phospholactate (2-PL) as (2S)-lactyl-2-diphospho-5'-guanosine, via the condensation of 2-PL with GTP. It is involved in the biosynthesis of coenzyme F420, a hydride carrier cofactor. The polypeptide is 2-phospho-L-lactate guanylyltransferase (Methanosphaerula palustris (strain ATCC BAA-1556 / DSM 19958 / E1-9c)).